Reading from the N-terminus, the 375-residue chain is 23S rRNA (uracil(747)-C(5))-methyltransferase RlmC (375 aa).

[4Fe-4S] cluster contacts are provided by Cys3, Cys11, Cys14, and Cys87. S-adenosyl-L-methionine is bound by residues Gln212, Phe241, Glu262, and Asn307. The active-site Nucleophile is Cys334.

Belongs to the class I-like SAM-binding methyltransferase superfamily. RNA M5U methyltransferase family. RlmC subfamily.

The catalysed reaction is uridine(747) in 23S rRNA + S-adenosyl-L-methionine = 5-methyluridine(747) in 23S rRNA + S-adenosyl-L-homocysteine + H(+). In terms of biological role, catalyzes the formation of 5-methyl-uridine at position 747 (m5U747) in 23S rRNA. This chain is 23S rRNA (uracil(747)-C(5))-methyltransferase RlmC, found in Shigella boydii serotype 18 (strain CDC 3083-94 / BS512).